The chain runs to 515 residues: Tripartite motif-containing protein 5 (515 aa).

Ala-2 carries the N-acetylalanine modification. The RING-type zinc finger occupies 15–60; that stretch reads CPICLELLTEPLSLPCGHSFCQACITANHKESMLYKEEERSCPVCR. Residue Ser-87 is modified to Phosphoserine. A B box-type zinc finger spans residues 92-133; the sequence is QKVDHCARHGEKLLLFCQEDSKVICWLCERSQEHRGHHTFLM. The Zn(2+) site is built by Cys-97, His-100, Cys-119, and His-125. A coiled-coil region spans residues 137-225; that stretch reads AQEYHVKLQT…LTKSETEMVQ (89 aa). Residues 187–200 form a required for interaction with GABARAP and for autophagy region; sequence FEQLREILDWEESN. One can recognise a B30.2/SPRY domain in the interval 283–515; sequence LKGMLDMFRE…VPMTLCSPSS (233 aa).

It belongs to the TRIM/RBCC family. In terms of assembly, can form homodimers and homotrimers. In addition to lower-order dimerization, also exhibits a higher-order multimerization and both low- and high-order multimerizations are essential for its restriction activity. Interacts with BTBD1 and BTBD2. Interacts with PSMC4, PSMC5, PSMD7 and HSPA8/HSC70. Interacts (via B30.2/SPRY domain) with HSPA1A/B. Interacts with PSMC2, MAP3K7/TAK1, TAB2 and TAB3. Interacts with SQSTM1. Interacts with TRIM6 and TRIM34. Interacts with ULK1 (phosphorylated form), GABARAP, GABARAPL1, GABARAPL2, MAP1LC3A, MAP1LC3C and BECN1. In terms of processing, degraded in a proteasome-independent fashion in the absence of viral infection but in a proteasome-dependent fashion following exposure to restriction sensitive virus. Post-translationally, autoubiquitinated in a RING finger- and UBE2D2-dependent manner. Monoubiquitinated by TRIM21. Deubiquitinated by Yersinia YopJ. Ubiquitination may not lead to proteasomal degradation.

The protein resides in the cytoplasm. It is found in the nucleus. It carries out the reaction S-ubiquitinyl-[E2 ubiquitin-conjugating enzyme]-L-cysteine + [acceptor protein]-L-lysine = [E2 ubiquitin-conjugating enzyme]-L-cysteine + N(6)-ubiquitinyl-[acceptor protein]-L-lysine.. The protein operates within protein modification; protein ubiquitination. Its function is as follows. Capsid-specific restriction factor that prevents infection from non-host-adapted retroviruses. Blocks viral replication early in the life cycle, after viral entry but before reverse transcription. In addition to acting as a capsid-specific restriction factor, also acts as a pattern recognition receptor that activates innate immune signaling in response to the retroviral capsid lattice. Binding to the viral capsid triggers its E3 ubiquitin ligase activity, and in concert with the heterodimeric ubiquitin conjugating enzyme complex UBE2V1-UBE2N (also known as UBC13-UEV1A complex) generates 'Lys-63'-linked polyubiquitin chains, which in turn are catalysts in the autophosphorylation of the MAP3K7/TAK1 complex (includes TAK1, TAB2, and TAB3). Activation of the MAP3K7/TAK1 complex by autophosphorylation results in the induction and expression of NF-kappa-B and MAPK-responsive inflammatory genes, thereby leading to an innate immune response in the infected cell. Restricts infection by human immunodeficiency virus type 1 (HIV-1), simian immunodeficiency virus (SIV-mac) and N-tropic murine leukemia viruse (N-MLV). Plays a role in regulating autophagy through activation of autophagy regulator BECN1 by causing its dissociation from its inhibitors BCL2 and TAB2. This is Tripartite motif-containing protein 5 (TRIM5) from Chlorocebus tantalus (Tantalus monkey).